Here is an 83-residue protein sequence, read N- to C-terminus: uncharacterized protein (83 aa).

This is an uncharacterized protein from Schizosaccharomyces pombe (strain 972 / ATCC 24843) (Fission yeast).